The following is a 73-amino-acid chain: Large ribosomal subunit protein uL29 (73 aa).

The protein belongs to the universal ribosomal protein uL29 family.

This is Large ribosomal subunit protein uL29 from Synechococcus sp. (strain JA-2-3B'a(2-13)) (Cyanobacteria bacterium Yellowstone B-Prime).